A 359-amino-acid chain; its full sequence is Tropomodulin-1 (359 aa).

The segment at Glu-36–Pro-61 is disordered. A tropomyosin-binding region spans residues Pro-39 to His-138.

This sequence belongs to the tropomodulin family. Binds to the N-terminus of tropomyosin and to actin. Interacts with FLII. As to expression, highly expressed in the erythrocyte, heart and skeletal muscle.

The protein localises to the cytoplasm. Its subcellular location is the cytoskeleton. Blocks the elongation and depolymerization of the actin filaments at the pointed end. The Tmod/TM complex contributes to the formation of the short actin protofilament, which in turn defines the geometry of the membrane skeleton. May play an important role in regulating the organization of actin filaments by preferentially binding to a specific tropomyosin isoform at its N-terminus. The chain is Tropomodulin-1 (TMOD1) from Homo sapiens (Human).